The sequence spans 328 residues: 5,10-methylenetetrahydromethanopterin reductase (328 aa).

Belongs to the mer family.

The protein resides in the cytoplasm. The enzyme catalyses 5-methyl-5,6,7,8-tetrahydromethanopterin + oxidized coenzyme F420-(gamma-L-Glu)(n) + H(+) = 5,10-methylenetetrahydromethanopterin + reduced coenzyme F420-(gamma-L-Glu)(n). Its pathway is one-carbon metabolism; methanogenesis from CO(2); methyl-coenzyme M from 5,10-methylene-5,6,7,8-tetrahydromethanopterin: step 1/2. Its function is as follows. Catalyzes the reversible reduction of methylene-H(4)MPT to methyl-H(4)MPT. The sequence is that of 5,10-methylenetetrahydromethanopterin reductase from Methanosarcina mazei (strain ATCC BAA-159 / DSM 3647 / Goe1 / Go1 / JCM 11833 / OCM 88) (Methanosarcina frisia).